The primary structure comprises 301 residues: Aquaporin NIP2-3 (301 aa).

Transmembrane regions (helical) follow at residues 57–77 and 91–111; these read VISEVVATFLLVFVTCGAASI and SVAGGLIVTVMIYATGHISGA. Residues 114–116 carry the NPA 1 motif; it reads NPA. 3 helical membrane passes run 132 to 154, 172 to 192, and 200 to 220; these read VPFYWAAQFTGAMCAAFVLKAVL, ALAIEIVVTFNMMFVTCAVAT, and LAGLAVGSAVCITSIFAGPVS. The NPA 2 signature appears at 225–227; the sequence is NPA. The helical transmembrane segment at 238 to 258 threads the bilayer; sequence VFTGLWIYFLGPVVGTLSGAW.

This sequence belongs to the MIP/aquaporin (TC 1.A.8) family. NIP (TC 1.A.8.12) subfamily.

Its subcellular location is the membrane. Functionally, aquaporins facilitate the transport of water and small neutral solutes across cell membranes. This is Aquaporin NIP2-3 (NIP2-3) from Zea mays (Maize).